A 213-amino-acid polypeptide reads, in one-letter code: Insulin-like peptide INSL6 (213 aa).

Residues 1 to 20 (MPRLLRLSLLWLGLLLVRFS) form the signal peptide. Disulfide bonds link Cys-33–Cys-179, Cys-45–Cys-192, and Cys-178–Cys-183. Positions 55–168 (FEEETPFSRL…SNLFWGHHPQ (114 aa)) are cleaved as a propeptide — connecting peptide. The propeptide occupies 201–213 (LKEKRSSLVTKIY).

This sequence belongs to the insulin family. Testis specific.

The protein localises to the secreted. Its function is as follows. May have a role in sperm development and fertilization. The chain is Insulin-like peptide INSL6 (INSL6) from Homo sapiens (Human).